The sequence spans 145 residues: MAFDKLGRFFGISNDDELANDEEYTTQNEENNEDLPLNSINRDNVVSIKSGLNSSKSKIVLYEPRVYSDAKDVAQNLLNNKAVVINFSRMEDSSARRIVDFITGTVYTLNGEIQRIGDKIFLATPPKFVTDGKISDLVDKKDNLS.

The protein belongs to the SepF family. In terms of assembly, homodimer. Interacts with FtsZ.

The protein resides in the cytoplasm. In terms of biological role, cell division protein that is part of the divisome complex and is recruited early to the Z-ring. Probably stimulates Z-ring formation, perhaps through the cross-linking of FtsZ protofilaments. Its function overlaps with FtsA. The polypeptide is Cell division protein SepF (Lactobacillus acidophilus (strain ATCC 700396 / NCK56 / N2 / NCFM)).